The sequence spans 142 residues: Hemoglobin subunit alpha-4 (142 aa).

The region spanning 2 to 142 is the Globin domain; sequence TLTDSDKAAI…VATVLTSKYR (141 aa). His-59 contributes to the O2 binding site. His-88 lines the heme b pocket.

The protein belongs to the globin family. As to quaternary structure, heterotetramer of two alpha chains and two beta chains. As to expression, red blood cells.

Its function is as follows. This is a larval (tadpole) alpha-globin. The sequence is that of Hemoglobin subunit alpha-4 (hba4) from Xenopus laevis (African clawed frog).